The following is a 112-amino-acid chain: Elongin-C (112 aa).

It belongs to the SKP1 family. Heterotrimer of an A (ELOA, ELOA2 or ELOA3P), ELOB and ELOC subunit. The elongin BC complex interacts with EPOP; leading to recruit the elongin BC complex to Polycomb group (PcG) target genes, thereby restricting excessive activity of the PRC2/EED-EZH2 complex. Component of multiple cullin-RING E3 ubiquitin-protein ligase complexes composed of Elongin BC (ELOB and ELOC), a cullin (CUL2 or CUL5), a catalytic subunit (RBX1 or RNF7/RBX2), as well as a substrate adapter protein that can be either ASB2, ASB9, ASB11, KLHDC2, KLHDC3, KLHDC10, APPBP2, FEM1A, FEM1B, FEM1C, LRR1, PCMTD1, SOCS1, SOCS2, SOCS5, SPSB1, SPSB3, ELOA, VHL, WSB1, ZYG11B or RAB40C. Interacts with TMF1. As part of the Elongin BC E3 ubiquitin ligase complex; interacts with NRBP1. May form oligomers as a KLHDC2/KLHDC3-ELOB-ELOC complex; this interaction is autoinhibitory for the E3 ligase complex as the substrate-binding site of KLHDC2/KLHDC3 is blocked in the oligomer. Ubiquitinated by the DCX(AMBRA1) complex, leading to its degradation by the proteasome.

It localises to the nucleus. It functions in the pathway protein modification; protein ubiquitination. Its function is as follows. SIII, also known as elongin, is a general transcription elongation factor that increases the RNA polymerase II transcription elongation past template-encoded arresting sites. Subunit A is transcriptionally active and its transcription activity is strongly enhanced by binding to the dimeric complex of the SIII regulatory subunits B and C (elongin BC complex). In embryonic stem cells, the elongin BC complex is recruited by EPOP to Polycomb group (PcG) target genes in order generate genomic region that display both active and repressive chromatin properties, an important feature of pluripotent stem cells. Functionally, core component of multiple cullin-RING-based ECS (ElonginB/C-CUL2/5-SOCS-box protein) E3 ubiquitin-protein ligase complexes, which mediate the ubiquitination of target proteins. By binding to BC-box motifs it seems to link target recruitment subunits, like VHL and members of the SOCS box family, to Cullin/RBX1 modules that activate E2 ubiquitination enzymes. Component the von Hippel-Lindau ubiquitination complex CBC(VHL). A number of ECS complexes (containing either KLHDC2, KLHDC3, KLHDC10, APPBP2, FEM1A, FEM1B or FEM1C as substrate-recognition component) are part of the DesCEND (destruction via C-end degrons) pathway, which recognizes a C-degron located at the extreme C terminus of target proteins, leading to their ubiquitination and degradation. The ECS(ASB9) complex mediates ubiquitination and degradation of CKB. As part of a multisubunit ubiquitin ligase complex, polyubiquitinates monoubiquitinated POLR2A. ECS(LRR1) ubiquitinates MCM7 and promotes CMG replisome disassembly by VCP and chromatin extraction during S-phase. As part of the ECS(RAB40C) complex, mediates ANKRD28 ubiquitination and degradation, thereby inhibiting protein phosphatase 6 (PP6) complex activity and focal adhesion assembly during cell migration. The sequence is that of Elongin-C (ELOC) from Bos taurus (Bovine).